The chain runs to 117 residues: Large ribosomal subunit protein bL20c (117 aa).

It belongs to the bacterial ribosomal protein bL20 family.

The protein localises to the plastid. Its subcellular location is the chloroplast. In terms of biological role, binds directly to 23S ribosomal RNA and is necessary for the in vitro assembly process of the 50S ribosomal subunit. It is not involved in the protein synthesizing functions of that subunit. This is Large ribosomal subunit protein bL20c from Morus indica (Mulberry).